Here is a 338-residue protein sequence, read N- to C-terminus: Glycerol-3-phosphate dehydrogenase [NAD(P)+] (338 aa).

Residues S11, W12, H32, R33, and K106 each coordinate NADPH. Sn-glycerol 3-phosphate is bound by residues K106, G137, and S139. A141 contacts NADPH. The sn-glycerol 3-phosphate site is built by K192, D245, S255, R256, and N257. K192 serves as the catalytic Proton acceptor. R256 serves as a coordination point for NADPH. Residues V280 and E282 each coordinate NADPH.

The protein belongs to the NAD-dependent glycerol-3-phosphate dehydrogenase family.

The protein resides in the cytoplasm. The catalysed reaction is sn-glycerol 3-phosphate + NAD(+) = dihydroxyacetone phosphate + NADH + H(+). It carries out the reaction sn-glycerol 3-phosphate + NADP(+) = dihydroxyacetone phosphate + NADPH + H(+). It functions in the pathway membrane lipid metabolism; glycerophospholipid metabolism. Functionally, catalyzes the reduction of the glycolytic intermediate dihydroxyacetone phosphate (DHAP) to sn-glycerol 3-phosphate (G3P), the key precursor for phospholipid synthesis. This is Glycerol-3-phosphate dehydrogenase [NAD(P)+] from Lysinibacillus sphaericus (strain C3-41).